Reading from the N-terminus, the 302-residue chain is Glutaminase (302 aa).

Residues S61, N111, E155, N162, Y186, Y238, and V256 each coordinate substrate.

It belongs to the glutaminase family. Homotetramer.

It carries out the reaction L-glutamine + H2O = L-glutamate + NH4(+). The sequence is that of Glutaminase from Stutzerimonas stutzeri (strain A1501) (Pseudomonas stutzeri).